The sequence spans 827 residues: Spastin (827 aa).

The segment covering 1–13 has biased composition (polar residues); that stretch reads MVRNKYTLTTAGK. The segment at 1–58 is disordered; it reads MVRNKYTLTTAGKSPSKKSRTGSLSKQHDATGDDDGETGTLDGSGSAAGSPVGGGTDA. Residues 1-79 are Cytoplasmic-facing; the sequence is MVRNKYTLTT…KQNLYIISFP (79 aa). Residues 38–50 show a composition bias toward low complexity; the sequence is TGTLDGSGSAAGS. Positions 80–100 form an intramembrane region, helical; that stretch reads VIFVFNVLRSLLYQLFIVFRY. Topologically, residues 101 to 827 are cytoplasmic; the sequence is VYNFTTKVVY…WLQDFGDVTL (727 aa). 2 disordered regions span residues 127-190 and 207-229; these read QHGH…AHPL and SIQRSASGSQVGPGDPLLAKQKH. The span at 129-141 shows a compositional bias: basic residues; sequence GHHHHHHHRHSSH. The segment covering 142–190 has biased composition (low complexity); it reads SIHSTAAAHQLQQHQQQQQHQYSLLQQEQHGVTEPQQQQQQQHQAAHPL. Residues 231 to 306 form the MIT domain; that stretch reads HRRAFEYISK…SMARDRLQFL (76 aa). Disordered regions lie at residues 358-381, 398-433, and 476-526; these read HHPARGTAASSRPTTAATAPATPS, VGYKRPGNLGVMNKSQTLPRSMGGTRTTPTGTGGAG, and VSIP…PQIS. A compositionally biased stretch (low complexity) spans 364-381; it reads TAASSRPTTAATAPATPS. Low complexity-rich tracts occupy residues 476 to 486 and 510 to 524; these read VSIPIPGSSPV and QQPQQPQQQQQQQPQ. An ATP-binding site is contributed by 592-599; it reads GPPGNGKT.

Belongs to the AAA ATPase family. Spastin subfamily. As to quaternary structure, homohexamer. The homohexamer is stabilized by ATP-binding. The homohexamer may adopt a ring conformation through which microtubules pass prior to being severed. Interacts with microtubules.

The protein resides in the membrane. It localises to the cytoplasm. It is found in the cytoskeleton. Its subcellular location is the microtubule organizing center. The protein localises to the centrosome. It carries out the reaction n ATP + n H2O + a microtubule = n ADP + n phosphate + (n+1) alpha/beta tubulin heterodimers.. ATP-dependent microtubule severing protein. Microtubule severing may promote reorganization of cellular microtubule arrays and the release of microtubules from the microtubule organizing center following nucleation. The polypeptide is Spastin (spas) (Anopheles gambiae (African malaria mosquito)).